The primary structure comprises 431 residues: Enolase (431 aa).

Glutamine 167 serves as a coordination point for (2R)-2-phosphoglycerate. Glutamate 209 acts as the Proton donor in catalysis. 3 residues coordinate Mg(2+): aspartate 246, glutamate 290, and aspartate 317. Lysine 342, arginine 371, serine 372, and lysine 393 together coordinate (2R)-2-phosphoglycerate. Lysine 342 functions as the Proton acceptor in the catalytic mechanism.

It belongs to the enolase family. In terms of assembly, component of the RNA degradosome, a multiprotein complex involved in RNA processing and mRNA degradation. Mg(2+) serves as cofactor.

Its subcellular location is the cytoplasm. The protein localises to the secreted. It localises to the cell surface. It catalyses the reaction (2R)-2-phosphoglycerate = phosphoenolpyruvate + H2O. Its pathway is carbohydrate degradation; glycolysis; pyruvate from D-glyceraldehyde 3-phosphate: step 4/5. Its function is as follows. Catalyzes the reversible conversion of 2-phosphoglycerate (2-PG) into phosphoenolpyruvate (PEP). It is essential for the degradation of carbohydrates via glycolysis. The polypeptide is Enolase (Enterobacter sp. (strain 638)).